A 430-amino-acid chain; its full sequence is Purine nucleoside phosphorylase LACC1 (430 aa).

Residue K247 is modified to N6-acetyllysine. 3 residues coordinate Zn(2+): H250, C284, and H301.

It belongs to the purine nucleoside phosphorylase YfiH/LACC1 family. As to quaternary structure, interacts with FASN. Interacts with SDHA. Interacts with ATF6, EIF2AK3 and ERN1. In terms of processing, phosphorylated on tyrosine residues. Predominantly expressed in myeloid cells. Highly expressed in primary macrophages and dendritic cells sorted from the peritoneum or spleen, respectively (at protein level).

It is found in the cytoplasm. Its subcellular location is the nucleus. The protein localises to the endoplasmic reticulum. It localises to the peroxisome. It carries out the reaction adenosine + phosphate = alpha-D-ribose 1-phosphate + adenine. The catalysed reaction is inosine + phosphate = alpha-D-ribose 1-phosphate + hypoxanthine. The enzyme catalyses guanosine + phosphate = alpha-D-ribose 1-phosphate + guanine. It catalyses the reaction S-methyl-5'-thioadenosine + phosphate = 5-(methylsulfanyl)-alpha-D-ribose 1-phosphate + adenine. It carries out the reaction adenosine + H2O + H(+) = inosine + NH4(+). Its function is as follows. Purine nucleoside enzyme that catalyzes the phosphorolysis of adenosine, guanosine and inosine nucleosides, yielding D-ribose 1-phosphate and the respective free bases, adenine, guanine and hypoxanthine. Also catalyzes the phosphorolysis of S-methyl-5'-thioadenosine into adenine and S-methyl-5-thio-alpha-D-ribose 1-phosphate. Also has adenosine deaminase activity. Acts as a regulator of innate immunity in macrophages by modulating the purine nucleotide metabolism, thereby regulating the metabolic function and bioenergetic state of macrophages. Enables a purine nucleotide cycle between adenosine and inosine monophosphate and adenylosuccinate that prevents cytoplasmic acidification and balances the cytoplasmic-mitochondrial redox interface. The purine nucleotide cycle consumes aspartate and releases fumarate in a manner involving fatty acid oxidation and ATP-citrate lyase activity. Participates in pattern recognition receptor-induced cytokines in macrophages: associates with the NOD2-signaling complex and promotes optimal NOD2-induced signaling, cytokine secretion and bacterial clearance. Localizes to the endoplasmic reticulum upon PRR stimulation of macrophages and associates with endoplasmic reticulum-stress sensors, promoting the endoplasmic reticulum unfolded protein response (UPR). Does not show laccase activity. This is Purine nucleoside phosphorylase LACC1 from Mus musculus (Mouse).